The following is a 376-amino-acid chain: tRNA-specific 2-thiouridylase MnmA (376 aa).

Residues 17 to 24 and M43 contribute to the ATP site; that span reads GMSGGVDS. The interval 103–105 is interaction with target base in tRNA; that stretch reads NPD. Residue C108 is the Nucleophile of the active site. C108 and C204 are oxidised to a cystine. ATP is bound at residue G132. The segment at 154-156 is interaction with tRNA; it reads KDQ. Residue C204 is the Cysteine persulfide intermediate of the active site. Residues 316 to 317 form an interaction with tRNA region; it reads RY.

Belongs to the MnmA/TRMU family.

The protein localises to the cytoplasm. The enzyme catalyses S-sulfanyl-L-cysteinyl-[protein] + uridine(34) in tRNA + AH2 + ATP = 2-thiouridine(34) in tRNA + L-cysteinyl-[protein] + A + AMP + diphosphate + H(+). In terms of biological role, catalyzes the 2-thiolation of uridine at the wobble position (U34) of tRNA, leading to the formation of s(2)U34. In Pseudomonas syringae pv. syringae (strain B728a), this protein is tRNA-specific 2-thiouridylase MnmA.